The primary structure comprises 310 residues: tRNA uridine(34) hydroxylase (310 aa).

Residues 124–218 (SDPEVLLIDT…YFEEVPQEES (95 aa)) enclose the Rhodanese domain. Cysteine 178 acts as the Cysteine persulfide intermediate in catalysis.

Belongs to the TrhO family.

The enzyme catalyses uridine(34) in tRNA + AH2 + O2 = 5-hydroxyuridine(34) in tRNA + A + H2O. Functionally, catalyzes oxygen-dependent 5-hydroxyuridine (ho5U) modification at position 34 in tRNAs. The polypeptide is tRNA uridine(34) hydroxylase (Pseudomonas putida (strain GB-1)).